We begin with the raw amino-acid sequence, 997 residues long: Autophagy-related protein 9 (997 aa).

Residues 1-318 are Cytoplasmic-facing; sequence MERDEYQLPN…DVYNYYLGNG (318 aa). Ser19 carries the post-translational modification Phosphoserine. Polar residues predominate over residues 29 to 39; sequence VNPSLNSQEMS. The tract at residues 29–88 is disordered; it reads VNPSLNSQEMSNFPLPDIERGSSLLHSTNDSREDVDENDLRVPESDQGTSTEEEDEVDEE. Acidic residues predominate over residues 79–88; the sequence is TEEEDEVDEE. Glycyl lysine isopeptide (Lys-Gly) (interchain with G-Cter in ubiquitin) cross-links involve residues Lys113 and Lys121. Ser122 is modified (phosphoserine). 2 disordered regions span residues 127 to 159 and 214 to 234; these read LVEGSTDDSVPKVGQLSSEEEEDNEFINNDGFD and HHDKDKSANNGPRNINGNQKH. Lys138 participates in a covalent cross-link: Glycyl lysine isopeptide (Lys-Gly) (interchain with G-Cter in ubiquitin). Ser143 and Ser144 each carry phosphoserine. The segment covering 144–159 has biased composition (acidic residues); that stretch reads SEEEEDNEFINNDGFD. Over residues 221–233 the composition is skewed to polar residues; sequence ANNGPRNINGNQK. Residues 319 to 339 form a helical membrane-spanning segment; the sequence is FYCIILEKILNICTLLFVVFV. Residues 340–376 lie on the Lumenal side of the membrane; the sequence is STYMGHCVDYSKLPTSHRVSDIIIDKCYSNSITGFTK. The chain crosses the membrane as a helical span at residues 377-397; that stretch reads FFLWMFYFFVILKIVQLYFDV. At 398–538 the chain is on the cytoplasmic side; that stretch reads QKLSELQNFY…EELQKRFMLA (141 aa). An intramembrane segment occupies 539–559; sequence GFLNIILAPFLVTYFVLLYFF. The Cytoplasmic portion of the chain corresponds to 560–620; sequence RYFNEYKTSP…DQFPKEKTNL (61 aa). The chain crosses the membrane as a helical span at residues 621-641; sequence FLKFVSFICGSFVAILAFLTV. The Lumenal portion of the chain corresponds to 642–656; that stretch reads FDPENFLNFEITSDR. The residue at position 657 (Ser657) is a Phosphoserine. The chain crosses the membrane as a helical span at residues 657–677; it reads SVIFYITILGAIWSVSRNTIT. Residues 678–723 are Cytoplasmic-facing; the sequence is QEYHVFDPEETLKELYEYTHYLPKEWEGRYHKEEIKLEFCKLYNLR. A Glycyl lysine isopeptide (Lys-Gly) (interchain with G-Cter in ubiquitin) cross-link involves residue Lys701. Residues 724-744 lie within the membrane without spanning it; that stretch reads IVILLRELTSLMITPFVLWFS. At 745-997 the chain is on the cytoplasmic side; the sequence is LPSSAGRIVD…EYYKKSDVGR (253 aa). Phosphoserine is present on residues Ser787 and Ser792. Thr794 bears the Phosphothreonine mark. Phosphoserine is present on Ser802. Thr804 bears the Phosphothreonine mark. A phosphoserine mark is found at Ser831, Ser842, Ser864, Ser948, and Ser969.

Belongs to the ATG9 family. Homotrimer; forms a homotrimer with a central pore that forms a path between the two membrane leaflets. Interacts with ATG23 and ATG27 to form a cycling complex for trafficking to the PAS. Interacts (via N-terminus) with ATG11, required for recruitment of ATG9 to the PAS for the Cvt pathway during nutrient-rich conditions. Interacts (via N-terminus) with ATG17; required for recruitment to the PAS during autophagy and starved conditions. Interacts with ATG2 and ATG18; required for the retrieval of ATG9 from the PAS to the cytoplasmic pool. Interacts with ATG41. Interacts with the conserved oligomeric Golgi (COG) complex subunits COG3 and COG4. Interacts with TRS85. Post-translationally, phosphorylated by ATG1; phosphorylation is required for autophagy and cytoplasm to vacuole transport (Cvt) vesicle formation. Phosphorylation by ATG1 regulates ATG18 interaction and preautophagosome elongation. Phosphorylation at Ser-122 is required for selective autophagy by regulating anterograde trafficking and interaction with ATG23 and ATG27. Phosphorylation at Ser-122 prevents ubiquitination by the SCF(MET30) complex. In terms of processing, ubiquitinated by the SCF(MET30) complex in normal conditions, leading to its degradation by the proteasome, thereby preventing inappropriate induction of autophagy. Ubiquitination by the SCF(MET30) complex is prevented by phosphorylation at Ser-122.

The protein localises to the preautophagosomal structure membrane. It localises to the cytoplasmic vesicle membrane. It is found in the golgi apparatus membrane. The protein resides in the endoplasmic reticulum membrane. Its subcellular location is the mitochondrion membrane. It catalyses the reaction a 1,2-diacyl-sn-glycero-3-phosphocholine(in) = a 1,2-diacyl-sn-glycero-3-phosphocholine(out). The catalysed reaction is a 1,2-diacyl-sn-glycero-3-phospho-L-serine(in) = a 1,2-diacyl-sn-glycero-3-phospho-L-serine(out). It carries out the reaction a 1,2-diacyl-sn-glycero-3-phosphoethanolamine(in) = a 1,2-diacyl-sn-glycero-3-phosphoethanolamine(out). The enzyme catalyses a 1,2-diacyl-sn-glycero-3-phospho-(1D-myo-inositol-3-phosphate)(in) = a 1,2-diacyl-sn-glycero-3-phospho-(1D-myo-inositol-3-phosphate)(out). Phospholipid scramblase involved in autophagy and cytoplasm to vacuole transport (Cvt) vesicle formation. Cycles between the preautophagosomal structure/phagophore assembly site (PAS) and the cytoplasmic vesicle pool and supplies membrane for the growing autophagosome. Lipid scramblase activity plays a key role in preautophagosomal structure/phagophore assembly by distributing the phospholipids that arrive through ATG2 from the cytoplasmic to the luminal leaflet of the bilayer, thereby driving autophagosomal membrane expansion. Required for mitophagy. Also involved in endoplasmic reticulum-specific autophagic process and is essential for the survival of cells subjected to severe ER stress. Different machineries are required for anterograde trafficking to the PAS during either the Cvt pathway or bulk autophagy and for retrograde trafficking. Recruits vesicle-tethering proteins TRS85 and YPT1 to the autophagosome formation site. Also recruits ATG23 and ATG8 to the PAS. The sequence is that of Autophagy-related protein 9 from Saccharomyces cerevisiae (strain YJM789) (Baker's yeast).